Here is a 349-residue protein sequence, read N- to C-terminus: Xylitol-binding protein (349 aa).

The signal sequence occupies residues 1-22; the sequence is MNITSKIGAIAAAGAVGLGLTA. C23 carries the N-palmitoyl cysteine lipid modification. C23 is lipidated: S-diacylglycerol cysteine. 6 residues coordinate xylitol: Y42, N121, R173, N224, D249, and Q269.

The protein belongs to the bacterial solute-binding protein 2 family.

The protein resides in the cell membrane. In terms of biological role, part of an ABC transporter complex likely involved in xylitol import. Binds xylitol. The polypeptide is Xylitol-binding protein (Mycolicibacterium smegmatis (strain ATCC 700084 / mc(2)155) (Mycobacterium smegmatis)).